A 388-amino-acid polypeptide reads, in one-letter code: Succinate--CoA ligase [ADP-forming] subunit beta (388 aa).

One can recognise an ATP-grasp domain in the interval 9 to 244 (KQLFAEYGLP…PSQDDPREAH (236 aa)). ATP-binding positions include lysine 46, 53-55 (GRG), glutamate 99, threonine 102, and glutamate 107. Residues asparagine 199 and aspartate 213 each coordinate Mg(2+). Residues asparagine 264 and 321-323 (GIV) each bind substrate.

The protein belongs to the succinate/malate CoA ligase beta subunit family. Heterotetramer of two alpha and two beta subunits. It depends on Mg(2+) as a cofactor.

The enzyme catalyses succinate + ATP + CoA = succinyl-CoA + ADP + phosphate. The catalysed reaction is GTP + succinate + CoA = succinyl-CoA + GDP + phosphate. Its pathway is carbohydrate metabolism; tricarboxylic acid cycle; succinate from succinyl-CoA (ligase route): step 1/1. Its function is as follows. Succinyl-CoA synthetase functions in the citric acid cycle (TCA), coupling the hydrolysis of succinyl-CoA to the synthesis of either ATP or GTP and thus represents the only step of substrate-level phosphorylation in the TCA. The beta subunit provides nucleotide specificity of the enzyme and binds the substrate succinate, while the binding sites for coenzyme A and phosphate are found in the alpha subunit. The polypeptide is Succinate--CoA ligase [ADP-forming] subunit beta (Pseudomonas fluorescens (strain SBW25)).